A 100-amino-acid polypeptide reads, in one-letter code: Urease subunit gamma (100 aa).

This sequence belongs to the urease gamma subunit family. Heterotrimer of UreA (gamma), UreB (beta) and UreC (alpha) subunits. Three heterotrimers associate to form the active enzyme.

It is found in the cytoplasm. The catalysed reaction is urea + 2 H2O + H(+) = hydrogencarbonate + 2 NH4(+). The protein operates within nitrogen metabolism; urea degradation; CO(2) and NH(3) from urea (urease route): step 1/1. The chain is Urease subunit gamma from Tolumonas auensis (strain DSM 9187 / NBRC 110442 / TA 4).